Reading from the N-terminus, the 612-residue chain is tRNA uridine 5-carboxymethylaminomethyl modification enzyme MnmG (612 aa).

Residue 9–14 (GAGHAG) participates in FAD binding. An NAD(+)-binding site is contributed by 270–284 (GPLYCPSIEDKVFKF).

This sequence belongs to the MnmG family. As to quaternary structure, homodimer. Heterotetramer of two MnmE and two MnmG subunits. The cofactor is FAD.

Its subcellular location is the cytoplasm. Its function is as follows. NAD-binding protein involved in the addition of a carboxymethylaminomethyl (cmnm) group at the wobble position (U34) of certain tRNAs, forming tRNA-cmnm(5)s(2)U34. This Mycoplasma genitalium (strain ATCC 33530 / DSM 19775 / NCTC 10195 / G37) (Mycoplasmoides genitalium) protein is tRNA uridine 5-carboxymethylaminomethyl modification enzyme MnmG.